Reading from the N-terminus, the 447-residue chain is ATP-dependent protease ATPase subunit HslU (447 aa).

Residues Ile17, 59–64, Asp256, Glu321, and Arg393 each bind ATP; that span reads GVGKTE.

Belongs to the ClpX chaperone family. HslU subfamily. A double ring-shaped homohexamer of HslV is capped on each side by a ring-shaped HslU homohexamer. The assembly of the HslU/HslV complex is dependent on binding of ATP.

The protein localises to the cytoplasm. ATPase subunit of a proteasome-like degradation complex; this subunit has chaperone activity. The binding of ATP and its subsequent hydrolysis by HslU are essential for unfolding of protein substrates subsequently hydrolyzed by HslV. HslU recognizes the N-terminal part of its protein substrates and unfolds these before they are guided to HslV for hydrolysis. The sequence is that of ATP-dependent protease ATPase subunit HslU from Pseudomonas entomophila (strain L48).